The primary structure comprises 38 residues: Esterase-5 (38 aa).

A disordered region spans residues 1–38; the sequence is SAAADPLIVELPNGKVRGRDNEGYYEAEGIPRAEPPVG.

This sequence belongs to the type-B carboxylesterase/lipase family.

The catalysed reaction is a carboxylic ester + H2O = an alcohol + a carboxylate + H(+). The chain is Esterase-5 (Est-5) from Drosophila mojavensis (Fruit fly).